The sequence spans 156 residues: Rhombotin-1 (156 aa).

LIM zinc-binding domains are found at residues 22–84 (KGCA…LFGT) and 86–148 (GNCA…GQLN).

Expressed in the brain and not in the thymus.

Its subcellular location is the nucleus. In terms of biological role, may be involved in gene regulation within neural lineage cells potentially by direct DNA binding or by binding to other transcription factors. The chain is Rhombotin-1 (LMO1) from Bos taurus (Bovine).